We begin with the raw amino-acid sequence, 524 residues long: Cytokinin dehydrogenase 7 (524 aa).

Residues 58-238 (NCVKPLAVVR…TRARVLLQPA (181 aa)) form the FAD-binding PCMH-type domain. FAD contacts are provided by Ala-91, Gly-93, Asn-94, and Gly-95. Pros-8alpha-FAD histidine is present on His-96. The FAD site is built by Ser-97, Gln-101, Asp-162, Thr-167, Ser-173, Val-177, Ile-228, Tyr-479, Ser-514, and Gln-517.

The protein belongs to the oxygen-dependent FAD-linked oxidoreductase family. Requires FAD as cofactor. As to expression, expressed in the vasculature of roots, hypocotyls, cotyledons and leaves of young seedlings. In flowers, expressed in the transmitting tissue of the gynoecium prior to pollination. Expressed in the mature embryo sac with maximum activity in the egg cell and the synergids.

The protein localises to the cytoplasm. Its subcellular location is the cytosol. The catalysed reaction is N(6)-dimethylallyladenine + A + H2O = 3-methyl-2-butenal + adenine + AH2. In terms of biological role, catalyzes the oxidation of cytokinins, a family of N(6)-substituted adenine derivatives that are plant hormones, where the substituent is an isopentenyl group. Catalyzes in vitro the oxidation of various types of cytokinin nucleotides that are known as direct products of cytokinin biosynthesis. This is Cytokinin dehydrogenase 7 (CKX7) from Arabidopsis thaliana (Mouse-ear cress).